The primary structure comprises 356 residues: MALLSDLINLNLSDVTEKIIAEYIWIGGSGMDLRSKARTLSGPVSDPHKLPKWNYDGSSTGQAPGEDSEVILYPQAIFKDPFRRGNNILVMCDTYTPAGEPIPTNKRHNAAKIFSHPEVLAEETWYGIEQEYTLLQNSVKWPIGWPVGGYPGPQGPYYCGIGADKAFGRDIVDSHYKACLYAGINISGINGEVMPGQWEFQVGPAVGISAGDELWVARYILERITEIAGVVVSFDPKPIQGDWNGAGAHTNYSTKSMRNDGGYEIIKKAIEKLGLRHKEHIAAYGEGNERRLTGRHETADINTFLWGVANRGASIRVGRDTEKEGKGYFEDRRPASNMDPYVVTSMIAESTILWKP.

One can recognise a GS beta-grasp domain in the interval 19–99 (IIAEYIWIGG…VMCDTYTPAG (81 aa)). Residues 106 to 356 (KRHNAAKIFS…IAESTILWKP (251 aa)) form the GS catalytic domain.

Belongs to the glutamine synthetase family. Homooctamer.

It is found in the cytoplasm. It carries out the reaction L-glutamate + NH4(+) + ATP = L-glutamine + ADP + phosphate + H(+). This is Glutamine synthetase cytosolic isozyme 2 (GS1-2) from Vitis vinifera (Grape).